The following is a 73-amino-acid chain: uncharacterized protein (73 aa).

An N-terminal signal peptide occupies residues 1–28 (MKFLLSVIAGLLILALYLFWKVQPPVWI).

This is an uncharacterized protein from Bacillus subtilis (strain 168).